The chain runs to 589 residues: V-type ATP synthase alpha chain (589 aa).

239–246 lines the ATP pocket; sequence GPFGAGKT.

This sequence belongs to the ATPase alpha/beta chains family.

The catalysed reaction is ATP + H2O + 4 H(+)(in) = ADP + phosphate + 5 H(+)(out). In terms of biological role, produces ATP from ADP in the presence of a proton gradient across the membrane. The V-type alpha chain is a catalytic subunit. This Treponema denticola (strain ATCC 35405 / DSM 14222 / CIP 103919 / JCM 8153 / KCTC 15104) protein is V-type ATP synthase alpha chain.